A 228-amino-acid polypeptide reads, in one-letter code: 3-oxoadipate CoA-transferase subunit A (228 aa).

Residue 25-31 coordinates CoA; the sequence is GGFGTAG.

This sequence belongs to the 3-oxoacid CoA-transferase subunit A family. Heterodimer.

It carries out the reaction 3-oxoadipate + succinyl-CoA = 3-oxoadipyl-CoA + succinate. Its pathway is aromatic compound metabolism; beta-ketoadipate pathway; acetyl-CoA and succinyl-CoA from 3-oxoadipate: step 1/2. This Acinetobacter baylyi (strain ATCC 33305 / BD413 / ADP1) protein is 3-oxoadipate CoA-transferase subunit A (pcaI).